Here is a 564-residue protein sequence, read N- to C-terminus: Arginine--tRNA ligase (564 aa).

The 'HIGH' region signature appears at 124 to 134 (PNIAKDMHVGH).

The protein belongs to the class-I aminoacyl-tRNA synthetase family. As to quaternary structure, monomer.

Its subcellular location is the cytoplasm. The enzyme catalyses tRNA(Arg) + L-arginine + ATP = L-arginyl-tRNA(Arg) + AMP + diphosphate. The protein is Arginine--tRNA ligase of Chlamydia caviae (strain ATCC VR-813 / DSM 19441 / 03DC25 / GPIC) (Chlamydophila caviae).